A 188-amino-acid chain; its full sequence is Trafficking protein particle complex subunit 5 (188 aa).

Phosphoserine is present on Ser-10.

The protein belongs to the TRAPP small subunits family. BET3 subfamily. Component of the multisubunit TRAPP (transport protein particle) complex, which includes at least TRAPPC2, TRAPPC2L, TRAPPC3, TRAPPC3L, TRAPPC4, TRAPPC5, TRAPPC8, TRAPPC9, TRAPPC10, TRAPPC11 and TRAPPC12.

The protein localises to the golgi apparatus. Its subcellular location is the cis-Golgi network. It localises to the endoplasmic reticulum. Functionally, may play a role in vesicular transport from endoplasmic reticulum to Golgi. The protein is Trafficking protein particle complex subunit 5 (Trappc5) of Mus musculus (Mouse).